A 180-amino-acid chain; its full sequence is Large ribosomal subunit protein uL5 (180 aa).

This sequence belongs to the universal ribosomal protein uL5 family. Part of the 50S ribosomal subunit; part of the 5S rRNA/L5/L18/L25 subcomplex. Contacts the 5S rRNA and the P site tRNA. Forms a bridge to the 30S subunit in the 70S ribosome.

This is one of the proteins that bind and probably mediate the attachment of the 5S RNA into the large ribosomal subunit, where it forms part of the central protuberance. In the 70S ribosome it contacts protein S13 of the 30S subunit (bridge B1b), connecting the 2 subunits; this bridge is implicated in subunit movement. Contacts the P site tRNA; the 5S rRNA and some of its associated proteins might help stabilize positioning of ribosome-bound tRNAs. The polypeptide is Large ribosomal subunit protein uL5 (Brevibacillus brevis (strain 47 / JCM 6285 / NBRC 100599)).